The chain runs to 123 residues: Large ribosomal subunit protein uL14 (123 aa).

It belongs to the universal ribosomal protein uL14 family. Part of the 50S ribosomal subunit. Forms a cluster with proteins L3 and L19. In the 70S ribosome, L14 and L19 interact and together make contacts with the 16S rRNA in bridges B5 and B8.

Its function is as follows. Binds to 23S rRNA. Forms part of two intersubunit bridges in the 70S ribosome. The chain is Large ribosomal subunit protein uL14 from Erwinia tasmaniensis (strain DSM 17950 / CFBP 7177 / CIP 109463 / NCPPB 4357 / Et1/99).